We begin with the raw amino-acid sequence, 207 residues long: Thaumatin-like protein 1 (207 aa).

Intrachain disulfides connect Cys9–Cys202, Cys50–Cys60, Cys65–Cys71, Cys117–Cys191, Cys122–Cys174, Cys130–Cys140, Cys144–Cys153, and Cys154–Cys161.

Belongs to the thaumatin family. Monomer. In terms of processing, not glycosylated.

It is found in the secreted. Functionally, acidic thaumatin-like protein. Exhibits weak beta-1,3-glucanase activity with laminarin as substrate. The sequence is that of Thaumatin-like protein 1 (TLP1) from Manilkara zapota (Sapodilla plum).